The sequence spans 181 residues: GTP cyclohydrolase 1 2 (181 aa).

It belongs to the GTP cyclohydrolase I family. Homomer.

It carries out the reaction GTP + H2O = 7,8-dihydroneopterin 3'-triphosphate + formate + H(+). Its pathway is cofactor biosynthesis; 7,8-dihydroneopterin triphosphate biosynthesis; 7,8-dihydroneopterin triphosphate from GTP: step 1/1. This Pseudomonas aeruginosa (strain ATCC 15692 / DSM 22644 / CIP 104116 / JCM 14847 / LMG 12228 / 1C / PRS 101 / PAO1) protein is GTP cyclohydrolase 1 2 (folE2).